A 1169-amino-acid polypeptide reads, in one-letter code: Transcription-repair-coupling factor (1169 aa).

The 162-residue stretch at 634–795 (DMERARPMDR…MLGVRDLSVI (162 aa)) folds into the Helicase ATP-binding domain. Residue 647 to 654 (GDVGYGKT) participates in ATP binding. A DEEQ box motif is present at residues 748–751 (DEEQ). The region spanning 809 to 970 (VLEQNTNFIK…GFKIAMRDLN (162 aa)) is the Helicase C-terminal domain.

It in the N-terminal section; belongs to the UvrB family. This sequence in the C-terminal section; belongs to the helicase family. RecG subfamily.

The protein localises to the cytoplasm. Couples transcription and DNA repair by recognizing RNA polymerase (RNAP) stalled at DNA lesions. Mediates ATP-dependent release of RNAP and its truncated transcript from the DNA, and recruitment of nucleotide excision repair machinery to the damaged site. The sequence is that of Transcription-repair-coupling factor from Staphylococcus epidermidis (strain ATCC 12228 / FDA PCI 1200).